Here is an 82-residue protein sequence, read N- to C-terminus: Large ribosomal subunit protein bL28 (82 aa).

This sequence belongs to the bacterial ribosomal protein bL28 family.

This Vesicomyosocius okutanii subsp. Calyptogena okutanii (strain HA) protein is Large ribosomal subunit protein bL28.